The following is a 304-amino-acid chain: Glyceraldehyde-3-phosphate dehydrogenase 2 (304 aa).

Residues 1–2, Asp22, and Arg67 each bind NAD(+); that span reads RI. D-glyceraldehyde 3-phosphate is bound by residues 138 to 140, Thr169, 198 to 199, and Arg221; these read SCT and TG. Cys139 (nucleophile) is an active-site residue. Residue Asn303 participates in NAD(+) binding.

The protein belongs to the glyceraldehyde-3-phosphate dehydrogenase family. Homotetramer.

Its subcellular location is the cytoplasm. It carries out the reaction D-glyceraldehyde 3-phosphate + phosphate + NAD(+) = (2R)-3-phospho-glyceroyl phosphate + NADH + H(+). Its pathway is carbohydrate degradation; glycolysis; pyruvate from D-glyceraldehyde 3-phosphate: step 1/5. The chain is Glyceraldehyde-3-phosphate dehydrogenase 2 (Gapdh2) from Drosophila subobscura (Fruit fly).